Here is a 204-residue protein sequence, read N- to C-terminus: MTKRTVIIGVGGPVGSGKTLLLERLTRRMSDLNLAVITNDIYTKEDALFLAKNSSLDEDRIIGVETGGCPHTAIREDASMNFEAIETLQERFNHDLDVIFLESGGDNLAATFSPDLVDFTIYIIDVAQGEKIPRKAGQGMIKSDLFLINKTDLAPYVGANLDRMREDTLHFRNEDSFIFTNLNNDDNVKEVEEWIRKNFLLEDL.

12-19 contacts GTP; sequence GPVGSGKT.

This sequence belongs to the SIMIBI class G3E GTPase family. UreG subfamily. As to quaternary structure, homodimer. UreD, UreF and UreG form a complex that acts as a GTP-hydrolysis-dependent molecular chaperone, activating the urease apoprotein by helping to assemble the nickel containing metallocenter of UreC. The UreE protein probably delivers the nickel.

The protein localises to the cytoplasm. Facilitates the functional incorporation of the urease nickel metallocenter. This process requires GTP hydrolysis, probably effectuated by UreG. This is Urease accessory protein UreG from Streptococcus salivarius (strain 57.I).